The primary structure comprises 434 residues: Putative magnesium transporter MRS2-D (434 aa).

Disordered stretches follow at residues 1–21 (MAAR…AAGE), 126–171 (AASP…DGEA), and 279–311 (EASE…AGGG). The segment covering 9–21 (AAGAGAPAPAAGE) has biased composition (low complexity). Basic and acidic residues predominate over residues 279–291 (EASELEDHSSRDE). Helical transmembrane passes span 367 to 387 (GILL…TGVF) and 405 to 425 (FPCA…AALL).

This sequence belongs to the CorA metal ion transporter (MIT) (TC 1.A.35.5) family.

It is found in the membrane. Its function is as follows. Putative magnesium transporter. This chain is Putative magnesium transporter MRS2-D (MRS2-D), found in Oryza sativa subsp. indica (Rice).